A 55-amino-acid chain; its full sequence is Large ribosomal subunit protein bL33 (55 aa).

This sequence belongs to the bacterial ribosomal protein bL33 family.

The protein is Large ribosomal subunit protein bL33 of Paramagnetospirillum magneticum (strain ATCC 700264 / AMB-1) (Magnetospirillum magneticum).